Here is a 154-residue protein sequence, read N- to C-terminus: Probable transcription factor At4g00232 (154 aa).

Positions 1 to 44 are disordered; the sequence is MDKANTNRSKVCGGSGEAKLTGKKRKNVSAKQSKKDAKKENSQM.

This sequence belongs to the GeBP family.

This is Probable transcription factor At4g00232 from Arabidopsis thaliana (Mouse-ear cress).